Consider the following 1143-residue polypeptide: DNA polymerase II large subunit (1143 aa).

Belongs to the archaeal DNA polymerase II family. As to quaternary structure, heterodimer of a large subunit and a small subunit.

The enzyme catalyses DNA(n) + a 2'-deoxyribonucleoside 5'-triphosphate = DNA(n+1) + diphosphate. It carries out the reaction Exonucleolytic cleavage in the 3'- to 5'-direction to yield nucleoside 5'-phosphates.. Possesses two activities: a DNA synthesis (polymerase) and an exonucleolytic activity that degrades single-stranded DNA in the 3'- to 5'-direction. Has a template-primer preference which is characteristic of a replicative DNA polymerase. The polypeptide is DNA polymerase II large subunit (polC) (Archaeoglobus fulgidus (strain ATCC 49558 / DSM 4304 / JCM 9628 / NBRC 100126 / VC-16)).